A 124-amino-acid chain; its full sequence is Large ribosomal subunit protein bL12 (124 aa).

Belongs to the bacterial ribosomal protein bL12 family. Homodimer. Part of the ribosomal stalk of the 50S ribosomal subunit. Forms a multimeric L10(L12)X complex, where L10 forms an elongated spine to which 2 to 4 L12 dimers bind in a sequential fashion. Binds GTP-bound translation factors.

In terms of biological role, forms part of the ribosomal stalk which helps the ribosome interact with GTP-bound translation factors. Is thus essential for accurate translation. In Anaeromyxobacter dehalogenans (strain 2CP-C), this protein is Large ribosomal subunit protein bL12.